The sequence spans 203 residues: Pyridoxine/pyridoxamine 5'-phosphate oxidase (203 aa).

Residues 51–56 (RMVLLK), 66–67 (YT), R72, K73, and Q95 each bind FMN. K56 serves as a coordination point for substrate. 3 residues coordinate substrate: Y113, R117, and S121. Residues 130–131 (QS) and W175 contribute to the FMN site. 181–183 (RLH) is a substrate binding site. Residue R185 coordinates FMN.

Belongs to the pyridoxamine 5'-phosphate oxidase family. As to quaternary structure, homodimer. FMN serves as cofactor.

The catalysed reaction is pyridoxamine 5'-phosphate + O2 + H2O = pyridoxal 5'-phosphate + H2O2 + NH4(+). It catalyses the reaction pyridoxine 5'-phosphate + O2 = pyridoxal 5'-phosphate + H2O2. It functions in the pathway cofactor metabolism; pyridoxal 5'-phosphate salvage; pyridoxal 5'-phosphate from pyridoxamine 5'-phosphate: step 1/1. The protein operates within cofactor metabolism; pyridoxal 5'-phosphate salvage; pyridoxal 5'-phosphate from pyridoxine 5'-phosphate: step 1/1. Its function is as follows. Catalyzes the oxidation of either pyridoxine 5'-phosphate (PNP) or pyridoxamine 5'-phosphate (PMP) into pyridoxal 5'-phosphate (PLP). The chain is Pyridoxine/pyridoxamine 5'-phosphate oxidase from Novosphingobium aromaticivorans (strain ATCC 700278 / DSM 12444 / CCUG 56034 / CIP 105152 / NBRC 16084 / F199).